Consider the following 268-residue polypeptide: Glucosamine-6-phosphate deaminase (268 aa).

D72 functions as the Proton acceptor; for enolization step in the catalytic mechanism. D141 functions as the For ring-opening step in the catalytic mechanism. H143 functions as the Proton acceptor; for ring-opening step in the catalytic mechanism. Residue E148 is the For ring-opening step of the active site.

The protein belongs to the glucosamine/galactosamine-6-phosphate isomerase family. NagB subfamily. In terms of assembly, homohexamer.

It carries out the reaction alpha-D-glucosamine 6-phosphate + H2O = beta-D-fructose 6-phosphate + NH4(+). Its pathway is amino-sugar metabolism; N-acetylneuraminate degradation; D-fructose 6-phosphate from N-acetylneuraminate: step 5/5. Its activity is regulated as follows. Allosterically activated by N-acetylglucosamine 6-phosphate (GlcNAc6P). Its function is as follows. Catalyzes the reversible isomerization-deamination of glucosamine 6-phosphate (GlcN6P) to form fructose 6-phosphate (Fru6P) and ammonium ion. The polypeptide is Glucosamine-6-phosphate deaminase (Histophilus somni (strain 2336) (Haemophilus somnus)).